A 448-amino-acid polypeptide reads, in one-letter code: Adenylosuccinate synthetase (448 aa).

Residues 22-28 and 50-52 contribute to the GTP site; these read GDEGKGK and GHT. The active-site Proton acceptor is Asp-23. Mg(2+) is bound by residues Asp-23 and Gly-50. IMP contacts are provided by residues 23-26, 48-51, Thr-139, Arg-153, Gln-234, Thr-249, and Arg-321; these read DEGK and NAGH. Residue His-51 is the Proton donor of the active site. 317–323 lines the substrate pocket; it reads SVTGRPR. GTP contacts are provided by residues Arg-323, 349-351, and 431-433; these read KLD and STG.

This sequence belongs to the adenylosuccinate synthetase family. In terms of assembly, homodimer. The cofactor is Mg(2+).

The protein resides in the cytoplasm. The catalysed reaction is IMP + L-aspartate + GTP = N(6)-(1,2-dicarboxyethyl)-AMP + GDP + phosphate + 2 H(+). Its pathway is purine metabolism; AMP biosynthesis via de novo pathway; AMP from IMP: step 1/2. Functionally, plays an important role in the de novo pathway of purine nucleotide biosynthesis. Catalyzes the first committed step in the biosynthesis of AMP from IMP. This is Adenylosuccinate synthetase from Burkholderia pseudomallei (strain 1106a).